A 295-amino-acid polypeptide reads, in one-letter code: Acetylglutamate kinase (295 aa).

Substrate contacts are provided by residues 67–68, R89, and N191; that span reads GG.

Belongs to the acetylglutamate kinase family. ArgB subfamily.

It is found in the cytoplasm. The catalysed reaction is N-acetyl-L-glutamate + ATP = N-acetyl-L-glutamyl 5-phosphate + ADP. Its pathway is amino-acid biosynthesis; L-arginine biosynthesis; N(2)-acetyl-L-ornithine from L-glutamate: step 2/4. Catalyzes the ATP-dependent phosphorylation of N-acetyl-L-glutamate. This chain is Acetylglutamate kinase, found in Nitrosomonas eutropha (strain DSM 101675 / C91 / Nm57).